Reading from the N-terminus, the 152-residue chain is Serglycin (152 aa).

The N-terminal stretch at 1-25 is a signal peptide; it reads MQVPVGSRLVLALAFVLVWGSSVQG. A propeptide spans 26–74 (activation peptide); sequence YPARRARYQWVRCKPNGFFANCIEEKGPQFDLIDESNNIGPPMNNPVLM. Cys38 and Cys47 are disulfide-bonded. Residues 66 to 115 form a disordered region; that stretch reads PPMNNPVLMEGPSKDFISNYDDYGSGSGSGSGSGSGSGSGSGSGFLGDME. 10 tandem repeats follow at residues 89 to 90, 91 to 92, 93 to 94, 95 to 96, 97 to 98, 99 to 100, 101 to 102, 103 to 104, 105 to 106, and 107 to 108. Residues 89-108 are 10 X 2 AA tandem repeats of G-S; the sequence is GSGSGSGSGSGSGSGSGSGS. Gly residues predominate over residues 90-110; that stretch reads SGSGSGSGSGSGSGSGSGSGF. Ser92 and Ser94 each carry an O-linked (Xyl...) (glycosaminoglycan) serine glycan. Residues Ser98, Ser100, Ser102, Ser104, Ser106, and Ser108 are each glycosylated (O-linked (Xyl...) (glycosaminoglycan) serine).

It belongs to the serglycin family. Binds to activated CD44 and to GZMB. O-glycosylated; contains chondroitin sulfate and heparan sulfate.

Its subcellular location is the cytoplasmic granule. It localises to the cytolytic granule. The protein resides in the secreted. It is found in the extracellular space. The protein localises to the golgi apparatus. Plays a role in formation of mast cell secretory granules and mediates storage of various compounds in secretory vesicles. Required for storage of some proteases in both connective tissue and mucosal mast cells and for storage of granzyme B in T-lymphocytes. Plays a role in localizing neutrophil elastase in azurophil granules of neutrophils. Mediates processing of MMP2. Plays a role in cytotoxic cell granule-mediated apoptosis by forming a complex with granzyme B which is delivered to cells by perforin to induce apoptosis. Regulates the secretion of TNF-alpha and may also regulate protease secretion. Inhibits bone mineralization. The polypeptide is Serglycin (Srgn) (Mus musculus (Mouse)).